Consider the following 688-residue polypeptide: Glycine--tRNA ligase beta subunit (688 aa).

Belongs to the class-II aminoacyl-tRNA synthetase family. In terms of assembly, tetramer of two alpha and two beta subunits.

It is found in the cytoplasm. It catalyses the reaction tRNA(Gly) + glycine + ATP = glycyl-tRNA(Gly) + AMP + diphosphate. The sequence is that of Glycine--tRNA ligase beta subunit from Actinobacillus pleuropneumoniae serotype 7 (strain AP76).